Here is a 333-residue protein sequence, read N- to C-terminus: Flotillin-like protein FloA (333 aa).

2 helical membrane-spanning segments follow: residues 8-28 and 30-50; these read LMPI…FTFI and VGLW…TLVG.

The protein belongs to the flotillin-like FloA family. As to quaternary structure, homooligomerizes.

It localises to the cell membrane. The protein localises to the membrane raft. In terms of biological role, found in functional membrane microdomains (FMM) that may be equivalent to eukaryotic membrane rafts. FMMs are highly dynamic and increase in number as cells age. Flotillins are thought to be important factors in membrane fluidity. The sequence is that of Flotillin-like protein FloA from Desulfitobacterium hafniense (strain DSM 10664 / DCB-2).